The following is a 525-amino-acid chain: Mitochondrial-processing peptidase subunit alpha (525 aa).

The transit peptide at 1–33 directs the protein to the mitochondrion; sequence MAAVVLAATRLLRGSGSWGCSRLRFGPPAYRRF. At Lys64 the chain carries N6-succinyllysine. At Lys299 the chain carries N6-acetyllysine.

This sequence belongs to the peptidase M16 family. In terms of assembly, heterodimer of PMPCA (alpha) and PMPCB (beta) subunits, forming the mitochondrial processing protease (MPP) in which PMPCA is involved in substrate recognition and binding and PMPCB is the catalytic subunit.

It is found in the mitochondrion matrix. The protein localises to the mitochondrion inner membrane. Substrate recognition and binding subunit of the essential mitochondrial processing protease (MPP), which cleaves the mitochondrial sequence off newly imported precursors proteins. This is Mitochondrial-processing peptidase subunit alpha (PMPCA) from Pongo abelii (Sumatran orangutan).